Here is a 78-residue protein sequence, read N- to C-terminus: Acyl carrier protein (78 aa).

A Carrier domain is found at 2-77 (SNLEERVKKI…AAIDYVTANA (76 aa)). The residue at position 37 (Ser37) is an O-(pantetheine 4'-phosphoryl)serine.

It belongs to the acyl carrier protein (ACP) family. 4'-phosphopantetheine is transferred from CoA to a specific serine of apo-ACP by AcpS. This modification is essential for activity because fatty acids are bound in thioester linkage to the sulfhydryl of the prosthetic group.

The protein resides in the cytoplasm. Its pathway is lipid metabolism; fatty acid biosynthesis. Functionally, carrier of the growing fatty acid chain in fatty acid biosynthesis. This Vibrio vulnificus (strain CMCP6) protein is Acyl carrier protein.